A 526-amino-acid chain; its full sequence is Radial spoke head protein 6 homolog A (526 aa).

3 disordered regions span residues 180 to 231 (EGED…EENG), 371 to 411 (VKSE…DAEI), and 469 to 526 (PPAP…EEDD). Composition is skewed to acidic residues over residues 181-212 (GEDD…EAED) and 374-395 (EEEE…EPEP). The span at 497–506 (QALKAAKEEA) shows a compositional bias: basic and acidic residues. Acidic residues predominate over residues 507–526 (EAAAEEMEEEEDEEEEEEDD).

The protein belongs to the flagellar radial spoke RSP4/6 family. Component of sperm axonemal radial spoke complexes.

It localises to the cytoplasm. The protein resides in the cytoskeleton. Its subcellular location is the flagellum axoneme. Functions as part of radial spoke complexes in the axoneme of sperm flagella that play an important part in motility. The triple radial spokes (RS1, RS2 and RS3) are required to modulate beating of the sperm flagellum. This chain is Radial spoke head protein 6 homolog A (rsph6a), found in Xenopus tropicalis (Western clawed frog).